A 258-amino-acid chain; its full sequence is Indole-3-glycerol phosphate synthase (258 aa).

This sequence belongs to the TrpC family.

The enzyme catalyses 1-(2-carboxyphenylamino)-1-deoxy-D-ribulose 5-phosphate + H(+) = (1S,2R)-1-C-(indol-3-yl)glycerol 3-phosphate + CO2 + H2O. The protein operates within amino-acid biosynthesis; L-tryptophan biosynthesis; L-tryptophan from chorismate: step 4/5. The polypeptide is Indole-3-glycerol phosphate synthase (Endomicrobium trichonymphae).